A 383-amino-acid chain; its full sequence is Probable tRNA sulfurtransferase (383 aa).

One can recognise a THUMP domain in the interval 58 to 158; that stretch reads NEIIHILKMI…ENKSYVWFDK (101 aa). Residues 176 to 177, 201 to 202, R259, G281, and Q290 contribute to the ATP site; these read LL and TF.

It belongs to the ThiI family.

Its subcellular location is the cytoplasm. It carries out the reaction [ThiI sulfur-carrier protein]-S-sulfanyl-L-cysteine + a uridine in tRNA + 2 reduced [2Fe-2S]-[ferredoxin] + ATP + H(+) = [ThiI sulfur-carrier protein]-L-cysteine + a 4-thiouridine in tRNA + 2 oxidized [2Fe-2S]-[ferredoxin] + AMP + diphosphate. The enzyme catalyses [ThiS sulfur-carrier protein]-C-terminal Gly-Gly-AMP + S-sulfanyl-L-cysteinyl-[cysteine desulfurase] + AH2 = [ThiS sulfur-carrier protein]-C-terminal-Gly-aminoethanethioate + L-cysteinyl-[cysteine desulfurase] + A + AMP + 2 H(+). It participates in cofactor biosynthesis; thiamine diphosphate biosynthesis. Functionally, catalyzes the ATP-dependent transfer of a sulfur to tRNA to produce 4-thiouridine in position 8 of tRNAs, which functions as a near-UV photosensor. Also catalyzes the transfer of sulfur to the sulfur carrier protein ThiS, forming ThiS-thiocarboxylate. This is a step in the synthesis of thiazole, in the thiamine biosynthesis pathway. The sulfur is donated as persulfide by IscS. This Malacoplasma penetrans (strain HF-2) (Mycoplasma penetrans) protein is Probable tRNA sulfurtransferase.